The sequence spans 398 residues: Phosphoglycerate kinase (398 aa).

Substrate contacts are provided by residues 23 to 25 (DLN), Arg38, 61 to 64 (HFGR), Arg120, and Arg153. Residues Lys203, Glu325, and 355–358 (GGDT) each bind ATP.

Belongs to the phosphoglycerate kinase family. As to quaternary structure, monomer.

Its subcellular location is the cytoplasm. It carries out the reaction (2R)-3-phosphoglycerate + ATP = (2R)-3-phospho-glyceroyl phosphate + ADP. It participates in carbohydrate degradation; glycolysis; pyruvate from D-glyceraldehyde 3-phosphate: step 2/5. This is Phosphoglycerate kinase from Mesorhizobium japonicum (strain LMG 29417 / CECT 9101 / MAFF 303099) (Mesorhizobium loti (strain MAFF 303099)).